A 394-amino-acid polypeptide reads, in one-letter code: Elongation factor Tu (394 aa).

A tr-type G domain is found at 10–205 (KPHMNVGTIG…TMDNYFDLPQ (196 aa)). Positions 19–26 (GHVDHGKT) are G1. Residue 19–26 (GHVDHGKT) participates in GTP binding. Position 26 (Thr-26) interacts with Mg(2+). Residues 61–65 (GITIN) form a G2 region. The segment at 82–85 (DCPG) is G3. Residues 82–86 (DCPGH) and 137–140 (NKLD) each bind GTP. The interval 137-140 (NKLD) is G4. The tract at residues 173-175 (SAF) is G5.

It belongs to the TRAFAC class translation factor GTPase superfamily. Classic translation factor GTPase family. EF-Tu/EF-1A subfamily. Monomer.

It localises to the cytoplasm. It carries out the reaction GTP + H2O = GDP + phosphate + H(+). Functionally, GTP hydrolase that promotes the GTP-dependent binding of aminoacyl-tRNA to the A-site of ribosomes during protein biosynthesis. This chain is Elongation factor Tu, found in Borrelia turicatae (strain 91E135).